We begin with the raw amino-acid sequence, 496 residues long: NADP-dependent glyceraldehyde-3-phosphate dehydrogenase (496 aa).

Residue alanine 2 is modified to N-acetylalanine. Threonine 4 carries the post-translational modification Phosphothreonine. Residues arginine 116 and 169-170 each bind substrate; that span reads NY. Lysine 192, threonine 195, and aspartate 230 together coordinate NADP(+). 245–249 is a binding site for NAD(+); that stretch reads GGDTG. Glutamate 264 (proton acceptor) is an active-site residue. 297–299 contacts substrate; the sequence is RCT. Cysteine 298 serves as the catalytic Nucleophile. Position 391 (glutamate 391) interacts with NADP(+). Position 451 (arginine 451) interacts with substrate.

This sequence belongs to the aldehyde dehydrogenase family.

Its subcellular location is the cytoplasm. The enzyme catalyses D-glyceraldehyde 3-phosphate + NADP(+) + H2O = (2R)-3-phosphoglycerate + NADPH + 2 H(+). Functionally, important as a means of generating NADPH for biosynthetic reactions. The chain is NADP-dependent glyceraldehyde-3-phosphate dehydrogenase (ALDH11A3) from Arabidopsis thaliana (Mouse-ear cress).